We begin with the raw amino-acid sequence, 118 residues long: Large ribosomal subunit protein bL20 (118 aa).

The protein belongs to the bacterial ribosomal protein bL20 family.

Functionally, binds directly to 23S ribosomal RNA and is necessary for the in vitro assembly process of the 50S ribosomal subunit. It is not involved in the protein synthesizing functions of that subunit. In Kosmotoga olearia (strain ATCC BAA-1733 / DSM 21960 / TBF 19.5.1), this protein is Large ribosomal subunit protein bL20.